The primary structure comprises 130 residues: MLAPLFLCCLRNLFRKLISFQPPQLGRTNMHYSKLPRTAIETEFKQNVGPPPKDLTAEVYFPSIKSRSHLPAVFYNQYFKHPKCVGEYGPKNGAERQIEERKVLPTTMMFSMLADCVLKSTPIPILGVAM.

A signal peptide spans 1 to 19 (MLAPLFLCCLRNLFRKLIS).

The protein localises to the secreted. This is an uncharacterized protein from Homo sapiens (Human).